The following is a 91-amino-acid chain: Small ribosomal subunit protein uS15c (91 aa).

This sequence belongs to the universal ribosomal protein uS15 family. Part of the 30S ribosomal subunit.

Its subcellular location is the plastid. It localises to the chloroplast. In Phalaenopsis aphrodite subsp. formosana (Moth orchid), this protein is Small ribosomal subunit protein uS15c (rps15).